A 34-amino-acid chain; its full sequence is Surfactant protein C (34 aa).

Residue Cys-4 is the site of S-palmitoyl cysteine attachment.

The protein resides in the secreted. Its subcellular location is the extracellular space. It is found in the surface film. Its function is as follows. Pulmonary surfactant associated proteins promote alveolar stability by lowering the surface tension at the air-liquid interface in the peripheral air spaces. This is Surfactant protein C (SFTPC) from Canis lupus familiaris (Dog).